Reading from the N-terminus, the 153-residue chain is Bursicon (153 aa).

Residues 1–22 (MLLYHIVGASVLICLLNETAKA) form the signal peptide. 5 disulfides stabilise this stretch: Cys-29-Cys-78, Cys-43-Cys-92, Cys-53-Cys-113, Cys-57-Cys-115, and Cys-75-Cys-118. Residues 29 to 119 (CQATPVIHFL…PLECMCRPCT (91 aa)) form the CTCK domain.

In terms of assembly, heterodimer of burs and pburs.

The protein resides in the secreted. In terms of biological role, final heterodimeric neurohormone released at the end of the molting cycle, involved in the sclerotization (tanning) of the insect cuticle, melanization and wing spreading. The protein is Bursicon of Apis mellifera (Honeybee).